The sequence spans 348 residues: Putative methylesterase 14, chloroplastic (348 aa).

2 disordered regions span residues 1 to 29 (MGNK…MNRS) and 60 to 80 (GSMS…SDPF). A chloroplast-targeting transit peptide spans 1-76 (MGNKIISMMK…GSTSTRKRTL (76 aa)). Phosphoserine is present on Ser77. The Acyl-ester intermediate role is filled by Ser172. Active-site charge relay system residues include Asp299 and His327.

The protein belongs to the AB hydrolase superfamily. Methylesterase family.

Its subcellular location is the plastid. It is found in the chloroplast. Functionally, putative methylesterase. The protein is Putative methylesterase 14, chloroplastic of Arabidopsis thaliana (Mouse-ear cress).